Here is a 147-residue protein sequence, read N- to C-terminus: Large ribosomal subunit protein uL15 (147 aa).

Over residues 1–20 the composition is skewed to basic and acidic residues; that stretch reads MTMHLNDLKPADGARTERTR. Positions 1–64 are disordered; it reads MTMHLNDLKP…GGQTPMQRRL (64 aa). Over residues 23-33 the composition is skewed to gly residues; it reads RGIGSGLGKTC. Basic residues predominate over residues 34–47; the sequence is GRGHKGSFARKGGG.

It belongs to the universal ribosomal protein uL15 family. In terms of assembly, part of the 50S ribosomal subunit.

Binds to the 23S rRNA. This chain is Large ribosomal subunit protein uL15, found in Xanthomonas campestris pv. campestris (strain 8004).